The sequence spans 93 residues: Ubiquinol-cytochrome-c reductase complex assembly factor 3 (93 aa).

Over 1 to 7 the chain is Mitochondrial matrix; the sequence is MDSLRKM. The chain crosses the membrane as a helical span at residues 8–28; the sequence is LISVAMLGAGAGVGYALLVIV. Positions 23 to 80 are mediates lipid-binding; it reads ALLVIVTPGERRKQEMLKEMPLQDPRSREEAARTQQLLLATLQEAATTQENVAWRKNW. The Mitochondrial intermembrane segment spans residues 29 to 93; sequence TPGERRKQEM…GEGGAGGRSP (65 aa).

This sequence belongs to the UQCC3 family. Associates with the ubiquinol-cytochrome c reductase complex (mitochondrial respiratory chain complex III or cytochrome b-c1 complex). Interacts with UQCC1. Forms a complex, named COMC, composed of UQCC1, UQCC2; UQCC3 and UQCC4; mediates MT-CYB hemylation and association with the first nuclear-encoded complex III subunit UQCRQ. Post-translationally, probably cleaved by OMA1 under mitochondrial stress conditions.

It localises to the mitochondrion inner membrane. Required for the assembly of the ubiquinol-cytochrome c reductase complex (mitochondrial respiratory chain complex III or cytochrome b-c1 complex), mediating cytochrome b recruitment and probably stabilization within the complex. Thereby, plays an important role in ATP production by mitochondria. Cardiolipin-binding protein, it may also control the cardiolipin composition of mitochondria membranes and their morphology. The sequence is that of Ubiquinol-cytochrome-c reductase complex assembly factor 3 from Homo sapiens (Human).